Reading from the N-terminus, the 468-residue chain is Argininosuccinate lyase (468 aa).

Belongs to the lyase 1 family. Argininosuccinate lyase subfamily.

The protein resides in the cytoplasm. The catalysed reaction is 2-(N(omega)-L-arginino)succinate = fumarate + L-arginine. It participates in amino-acid biosynthesis; L-arginine biosynthesis; L-arginine from L-ornithine and carbamoyl phosphate: step 3/3. This chain is Argininosuccinate lyase, found in Cutibacterium acnes (strain DSM 16379 / KPA171202) (Propionibacterium acnes).